The chain runs to 435 residues: GTPase Der (435 aa).

EngA-type G domains are found at residues 4 to 167 (PIVA…SPDA) and 175 to 350 (ISFS…ENKN). Residues 10–17 (GQPNVGKS), 57–61 (DTGGI), 119–122 (NKAD), 181–188 (GRPNVGKS), 228–232 (DTAGI), and 293–296 (NKWD) each bind GTP. The KH-like domain maps to 351-435 (QRIQSSVLND…PIKILPRKRK (85 aa)).

The protein belongs to the TRAFAC class TrmE-Era-EngA-EngB-Septin-like GTPase superfamily. EngA (Der) GTPase family. As to quaternary structure, associates with the 50S ribosomal subunit.

GTPase that plays an essential role in the late steps of ribosome biogenesis. The sequence is that of GTPase Der from Lactobacillus delbrueckii subsp. bulgaricus (strain ATCC 11842 / DSM 20081 / BCRC 10696 / JCM 1002 / NBRC 13953 / NCIMB 11778 / NCTC 12712 / WDCM 00102 / Lb 14).